The chain runs to 461 residues: ATP-dependent protease ATPase subunit HslU (461 aa).

Residues V21, 63–68, D274, E339, and R411 each bind ATP; that span reads GVGKTE.

Belongs to the ClpX chaperone family. HslU subfamily. As to quaternary structure, a double ring-shaped homohexamer of HslV is capped on each side by a ring-shaped HslU homohexamer. The assembly of the HslU/HslV complex is dependent on binding of ATP.

Its subcellular location is the cytoplasm. Functionally, ATPase subunit of a proteasome-like degradation complex; this subunit has chaperone activity. The binding of ATP and its subsequent hydrolysis by HslU are essential for unfolding of protein substrates subsequently hydrolyzed by HslV. HslU recognizes the N-terminal part of its protein substrates and unfolds these before they are guided to HslV for hydrolysis. The protein is ATP-dependent protease ATPase subunit HslU of Caldanaerobacter subterraneus subsp. tengcongensis (strain DSM 15242 / JCM 11007 / NBRC 100824 / MB4) (Thermoanaerobacter tengcongensis).